The following is a 235-amino-acid chain: UPF0173 metal-dependent hydrolase mll0680 (235 aa).

The protein belongs to the UPF0173 family.

The sequence is that of UPF0173 metal-dependent hydrolase mll0680 from Mesorhizobium japonicum (strain LMG 29417 / CECT 9101 / MAFF 303099) (Mesorhizobium loti (strain MAFF 303099)).